The sequence spans 50 residues: Inter-alpha-trypsin inhibitor heavy chain H2 (50 aa).

Belongs to the ITIH family. In terms of assembly, I-alpha-I plasma protease inhibitors are assembled from one or two heavy chains (HC) and one light chain, bikunin. Inter-alpha-inhibitor (I-alpha-I) is composed of ITIH1/HC1, ITIH2/HC2 and bikunin. Phosphorylated by FAM20C in the extracellular medium.

It localises to the secreted. Its function is as follows. May act as a carrier of hyaluronan in serum or as a binding protein between hyaluronan and other matrix protein, including those on cell surfaces in tissues to regulate the localization, synthesis and degradation of hyaluronan which are essential to cells undergoing biological processes. In Bos taurus (Bovine), this protein is Inter-alpha-trypsin inhibitor heavy chain H2 (ITIH2).